The chain runs to 313 residues: UDP-N-acetylglucosamine 3-dehydrogenase (313 aa).

Residues H13, L14, and R38 each contribute to the NAD(+) site.

Belongs to the Gfo/Idh/MocA family. As to quaternary structure, exists in multiple oligomeric states.

The enzyme catalyses UDP-N-acetyl-alpha-D-glucosamine + NAD(+) = UDP-2-acetamido-3-dehydro-2-deoxy-alpha-D-glucopyranose + NADH + H(+). Its pathway is bacterial outer membrane biogenesis; LPS lipid A biosynthesis. Its function is as follows. Oxidoreductase involved in the synthesis of 2,3-diamino-2,3-dideoxy-D-glucopyranose (GlcN3N), which is a component of lipid A in some species. Catalyzes the NAD(+)-dependent oxidation of the glucosamine 3-position of UDP-N-acetyl-glucosamine (UDP-GlcNAc) to a ketone moiety, forming UDP-2-acetamido-3-dehydro-2-deoxy-alpha-D-glucopyranose (UDP-3-oxo-GlcNAc). Is specific for UDP-GlcNAc, no activity is observed with UDP-glucose (UDP-Glc), UDP-glucoronic acid (UDP-GlcA), UDP-galactose (UDP-Gal) and UDP-N-acetylgalactosamine (UDP-GalNAc). Cannot use FAD(+) and NADP(+). The protein is UDP-N-acetylglucosamine 3-dehydrogenase of Acidithiobacillus ferrooxidans (strain ATCC 23270 / DSM 14882 / CIP 104768 / NCIMB 8455) (Ferrobacillus ferrooxidans (strain ATCC 23270)).